We begin with the raw amino-acid sequence, 160 residues long: Type-1 angiotensin II receptor-associated protein (160 aa).

Over M1–K9 the chain is Extracellular. Residues V10–Y30 traverse the membrane as a helical segment. Over A31–A53 the chain is Cytoplasmic. The helical transmembrane segment at I54–I74 threads the bilayer. Residues F75 to R86 lie on the Extracellular side of the membrane. Residues F87–Y107 traverse the membrane as a helical segment. At H108–Y160 the chain is on the cytoplasmic side. The interaction with AGTR1 stretch occupies residues H110–D122. At S127 the chain carries Phosphoserine. Residues Q128–Y160 are disordered. T135 carries the post-translational modification Phosphothreonine. A compositionally biased stretch (low complexity) spans D137–L149. S138 is subject to Phosphoserine.

Interacts with RACK1, and with the carboxy-terminal region of AGTR1.

The protein resides in the endoplasmic reticulum membrane. The protein localises to the golgi apparatus membrane. It localises to the cytoplasmic vesicle membrane. Appears to be a negative regulator of type-1 angiotensin II receptor-mediated signaling by regulating receptor internalization as well as mechanism of receptor desensitization such as phosphorylation. May play a role of negative regulator in cardiomyocyte hypertrophy induced by angiotensin II through an inhibition of p38 mitogen-activated protein kinase pathway. Attenuates type-1 angiotensin II receptor growth promoting effect and angiotensin II-induced phosphorylation of protein kinase AKT and of STAT3. This Rattus norvegicus (Rat) protein is Type-1 angiotensin II receptor-associated protein (Agtrap).